We begin with the raw amino-acid sequence, 769 residues long: Serine/threonine-protein kinase PLK4 (769 aa).

The Protein kinase domain maps to 14–267; that stretch reads YEVQHLLGKG…LEAVLCHPFM (254 aa). ATP is bound by residues 20-28 and Lys43; that span reads LGKGGFATV. Asp138 functions as the Proton acceptor in the catalytic mechanism. A Cryptic POLO box 1 (CPB1) domain is found at 381-498; that stretch reads EDRISVPPLN…ARFVGLVKSK (118 aa). Positions 499–602 constitute a Cryptic POLO box 2 (CPB2) domain; the sequence is TPKVTYFSTL…GRRPITDVQP (104 aa). The POLO box domain occupies 660-739; sequence PIKRINVPDI…IPNIQLKLKT (80 aa).

The protein belongs to the protein kinase superfamily. Ser/Thr protein kinase family. CDC5/Polo subfamily. In terms of assembly, homodimer. Ubiquitinated by the SCF(Slimb) ubiquitin ligase complex; leading to its degradation by the proteasome during interphase and regulating centriole number and ensuring the block to centriole reduplication.

The protein localises to the cytoplasm. It localises to the cytoskeleton. The protein resides in the microtubule organizing center. Its subcellular location is the centrosome. It is found in the centriole. The catalysed reaction is L-seryl-[protein] + ATP = O-phospho-L-seryl-[protein] + ADP + H(+). The enzyme catalyses L-threonyl-[protein] + ATP = O-phospho-L-threonyl-[protein] + ADP + H(+). Its function is as follows. Serine/threonine-protein kinase that plays a central role in centriole duplication. Able to trigger procentriole formation on the surface of the mother centriole cylinder, using mother centriole as a platform, leading to the recruitment of centriole biogenesis proteins such as sas-6. When overexpressed, it is able to induce centrosome amplification through the simultaneous generation of multiple procentrioles adjoining each parental centriole during S phase. Centrosome amplification following overexpression can initiate tumorigenesis, highlighting the importance of centrosome regulation in cancers. The sequence is that of Serine/threonine-protein kinase PLK4 (SAK) from Drosophila simulans (Fruit fly).